A 307-amino-acid polypeptide reads, in one-letter code: Protein FAM76A (307 aa).

Disordered regions lie at residues 161-181 (SRLSSGSHYNSQKTLSTSSIQ) and 287-307 (KQAAALSKGKKPEKSGAITSP). A coiled-coil region spans residues 217–297 (IIAQLKEEVA…QAAALSKGKK (81 aa)).

This sequence belongs to the FAM76 family.

This chain is Protein FAM76A (FAM76A), found in Gallus gallus (Chicken).